The following is a 259-amino-acid chain: Adenosylcobinamide-GDP ribazoletransferase (259 aa).

Helical transmembrane passes span 36–56 (FSPL…ILLL), 65–85 (MPFI…VDGL), 108–128 (IGAS…AALF), 133–153 (LILF…IWAI), 175–195 (GFLI…FILI), 201–221 (IIST…ALII), and 238–258 (GASV…ILPA).

Belongs to the CobS family. It depends on Mg(2+) as a cofactor.

The protein resides in the cell inner membrane. It catalyses the reaction alpha-ribazole + adenosylcob(III)inamide-GDP = adenosylcob(III)alamin + GMP + H(+). It carries out the reaction alpha-ribazole 5'-phosphate + adenosylcob(III)inamide-GDP = adenosylcob(III)alamin 5'-phosphate + GMP + H(+). Its pathway is cofactor biosynthesis; adenosylcobalamin biosynthesis; adenosylcobalamin from cob(II)yrinate a,c-diamide: step 7/7. Its function is as follows. Joins adenosylcobinamide-GDP and alpha-ribazole to generate adenosylcobalamin (Ado-cobalamin). Also synthesizes adenosylcobalamin 5'-phosphate from adenosylcobinamide-GDP and alpha-ribazole 5'-phosphate. In Prochlorococcus marinus (strain SARG / CCMP1375 / SS120), this protein is Adenosylcobinamide-GDP ribazoletransferase.